The chain runs to 89 residues: Small ribosomal subunit protein uS15 (89 aa).

This sequence belongs to the universal ribosomal protein uS15 family. In terms of assembly, part of the 30S ribosomal subunit. Forms a bridge to the 50S subunit in the 70S ribosome, contacting the 23S rRNA.

In terms of biological role, one of the primary rRNA binding proteins, it binds directly to 16S rRNA where it helps nucleate assembly of the platform of the 30S subunit by binding and bridging several RNA helices of the 16S rRNA. Functionally, forms an intersubunit bridge (bridge B4) with the 23S rRNA of the 50S subunit in the ribosome. The chain is Small ribosomal subunit protein uS15 from Bordetella parapertussis (strain 12822 / ATCC BAA-587 / NCTC 13253).